Reading from the N-terminus, the 194-residue chain is Imidazoleglycerol-phosphate dehydratase (194 aa).

Belongs to the imidazoleglycerol-phosphate dehydratase family.

The protein localises to the cytoplasm. The enzyme catalyses D-erythro-1-(imidazol-4-yl)glycerol 3-phosphate = 3-(imidazol-4-yl)-2-oxopropyl phosphate + H2O. Its pathway is amino-acid biosynthesis; L-histidine biosynthesis; L-histidine from 5-phospho-alpha-D-ribose 1-diphosphate: step 6/9. The sequence is that of Imidazoleglycerol-phosphate dehydratase from Caldicellulosiruptor saccharolyticus (strain ATCC 43494 / DSM 8903 / Tp8T 6331).